The primary structure comprises 1342 residues: DNA-directed RNA polymerase subunit beta (1342 aa).

It belongs to the RNA polymerase beta chain family. As to quaternary structure, the RNAP catalytic core consists of 2 alpha, 1 beta, 1 beta' and 1 omega subunit. When a sigma factor is associated with the core the holoenzyme is formed, which can initiate transcription.

The enzyme catalyses RNA(n) + a ribonucleoside 5'-triphosphate = RNA(n+1) + diphosphate. In terms of biological role, DNA-dependent RNA polymerase catalyzes the transcription of DNA into RNA using the four ribonucleoside triphosphates as substrates. The chain is DNA-directed RNA polymerase subunit beta from Blochmanniella floridana.